Consider the following 220-residue polypeptide: Deoxyribose-phosphate aldolase (220 aa).

Aspartate 89 acts as the Proton donor/acceptor in catalysis. Residue lysine 151 is the Schiff-base intermediate with acetaldehyde of the active site. Residue lysine 180 is the Proton donor/acceptor of the active site.

This sequence belongs to the DeoC/FbaB aldolase family. DeoC type 1 subfamily.

It localises to the cytoplasm. It carries out the reaction 2-deoxy-D-ribose 5-phosphate = D-glyceraldehyde 3-phosphate + acetaldehyde. It participates in carbohydrate degradation; 2-deoxy-D-ribose 1-phosphate degradation; D-glyceraldehyde 3-phosphate and acetaldehyde from 2-deoxy-alpha-D-ribose 1-phosphate: step 2/2. Catalyzes a reversible aldol reaction between acetaldehyde and D-glyceraldehyde 3-phosphate to generate 2-deoxy-D-ribose 5-phosphate. This is Deoxyribose-phosphate aldolase from Streptococcus sanguinis (strain SK36).